Reading from the N-terminus, the 262-residue chain is MHGLVVLLVCLAVGSAFAGTIGVSNADPFEREGRIVGGEDTTIRAHPYQVSLQNKKGSHFCGGSLINEDTVVTAAHCLVGKKIAKVFVRLGSTLYNEGGIVVAVRALTYNADYSSKTMENDVGILKLAEKVKETDDIRYIELATETPPTGTTAVVTGWGSKCYFWCMTLPKTLQAVYVNIVDWKTCASDEYKYGEVIYDTMVCAYEKKKDACQGDSGGPLAIGNTLVGIVSWGYACASNLLPGVYSDVPALRKWILNASQTL.

An N-terminal signal peptide occupies residues 1-19; sequence MHGLVVLLVCLAVGSAFAG. Positions 20 to 34 are cleaved as a propeptide — activation peptide; it reads TIGVSNADPFEREGR. The Peptidase S1 domain occupies 35 to 260; the sequence is IVGGEDTTIR…LRKWILNASQ (226 aa). Cys61 and Cys77 are oxidised to a cystine. Active-site charge relay system residues include His76 and Asp121. Cystine bridges form between Cys186–Cys203 and Cys212–Cys236. Ser216 functions as the Charge relay system in the catalytic mechanism.

The protein belongs to the peptidase S1 family.

It is found in the secreted. Its subcellular location is the extracellular space. The catalysed reaction is Preferential cleavage: Arg-|-Xaa, Lys-|-Xaa.. The protein is Trypsin theta (thetaTry) of Drosophila erecta (Fruit fly).